We begin with the raw amino-acid sequence, 634 residues long: DNA-directed RNA polymerase subunit gamma (634 aa).

Zn(2+) contacts are provided by C74, C76, C89, and C92. D471, D473, and D475 together coordinate Mg(2+).

It belongs to the RNA polymerase beta' chain family. RpoC1 subfamily. In cyanobacteria the RNAP catalytic core is composed of 2 alpha, 1 beta, 1 beta', 1 gamma and 1 omega subunit. When a sigma factor is associated with the core the holoenzyme is formed, which can initiate transcription. Requires Mg(2+) as cofactor. Zn(2+) serves as cofactor.

The catalysed reaction is RNA(n) + a ribonucleoside 5'-triphosphate = RNA(n+1) + diphosphate. Functionally, DNA-dependent RNA polymerase catalyzes the transcription of DNA into RNA using the four ribonucleoside triphosphates as substrates. In Synechococcus sp. (strain CC9311), this protein is DNA-directed RNA polymerase subunit gamma.